A 118-amino-acid chain; its full sequence is Protein TusC (118 aa).

This sequence belongs to the DsrF/TusC family. As to quaternary structure, heterohexamer, formed by a dimer of trimers. The hexameric TusBCD complex contains 2 copies each of TusB, TusC and TusD. The TusBCD complex interacts with TusE.

It localises to the cytoplasm. Functionally, part of a sulfur-relay system required for 2-thiolation of 5-methylaminomethyl-2-thiouridine (mnm(5)s(2)U) at tRNA wobble positions. This chain is Protein TusC, found in Salmonella paratyphi C (strain RKS4594).